The following is a 180-amino-acid chain: Putative 5'(3')-deoxyribonucleotidase (180 aa).

D9 (nucleophile) is an active-site residue. Mg(2+) is bound by residues D9, D11, and D135. D11 functions as the Proton donor in the catalytic mechanism.

It belongs to the 5'(3')-deoxyribonucleotidase family. Mg(2+) serves as cofactor.

Dephosphorylates the 5' and 2'(3')-phosphates of deoxyribonucleotides. The polypeptide is Putative 5'(3')-deoxyribonucleotidase (Staphylococcus aureus (strain Mu50 / ATCC 700699)).